The following is a 200-amino-acid chain: Large ribosomal subunit protein uL4 (200 aa).

Positions 42-65 (TRAQKTRSEVSGGGAKPWRQKGTG) are disordered.

Belongs to the universal ribosomal protein uL4 family. As to quaternary structure, part of the 50S ribosomal subunit.

Its function is as follows. One of the primary rRNA binding proteins, this protein initially binds near the 5'-end of the 23S rRNA. It is important during the early stages of 50S assembly. It makes multiple contacts with different domains of the 23S rRNA in the assembled 50S subunit and ribosome. In terms of biological role, forms part of the polypeptide exit tunnel. The chain is Large ribosomal subunit protein uL4 from Vibrio campbellii (strain ATCC BAA-1116).